Here is a 344-residue protein sequence, read N- to C-terminus: Follistatin (344 aa).

Residues 1–29 (MARPRHQPGGLCLLLLLLCQFMEDRSAQA) form the signal peptide. Residues 30-103 (GNCWLRQAKN…TCENVDCGPG (74 aa)) form the TB domain. Disulfide bonds link Cys-32-Cys-55, Cys-42-Cys-88, Cys-56-Cys-91, Cys-95-Cys-106, Cys-100-Cys-116, Cys-118-Cys-150, Cys-122-Cys-143, Cys-132-Cys-164, Cys-168-Cys-179, Cys-173-Cys-189, Cys-192-Cys-225, Cys-196-Cys-218, Cys-207-Cys-239, Cys-245-Cys-256, Cys-250-Cys-267, Cys-270-Cys-302, Cys-274-Cys-295, and Cys-284-Cys-316. One can recognise a Follistatin-like 1 domain in the interval 94–117 (TCENVDCGPGKKCRMNKKNKPRCV). Residues 112 to 166 (NKPRCVCAPDCSNITWKGLVCGLDGKTYRNECALLKARCKEQPELQVQYQGKCKK) form the Kazal-like 1 domain. Residue Asn-124 is glycosylated (N-linked (GlcNAc...) asparagine). The Follistatin-like 2 domain maps to 167 to 190 (TCRDVFCPGSSTCVVDQTNNAYCV). In terms of domain architecture, Kazal-like 2 spans 186 to 241 (NAYCVTCNRICPEPTSSEQYLCGNDGVTYPSACHLRKATCLLGRSIGLAYEGKCIK). Positions 244–268 (SCDDIQCTGGKKCLWDFKVGRGRCS) constitute a Follistatin-like 3 domain. The region spanning 261-318 (KVGRGRCSLCGELCPESKSEEPVCASDNATYASECAMKEAACSSGVLLEVKHSGSCNS) is the Kazal-like 3 domain. Residue Asn-288 is glycosylated (N-linked (GlcNAc...) asparagine). Residues 316–344 (CNSISEDTEDEEEDEDQDYSFPISSILEW) form a disordered region. Positions 321–333 (EDTEDEEEDEDQD) are enriched in acidic residues.

As to quaternary structure, monomer.

Its subcellular location is the secreted. In terms of biological role, binds directly to activin and functions as an activin antagonist. Specific inhibitor of the biosynthesis and secretion of pituitary follicle stimulating hormone (FSH). This chain is Follistatin, found in Bubalus bubalis (Domestic water buffalo).